A 455-amino-acid polypeptide reads, in one-letter code: Argininosuccinate lyase (455 aa).

Belongs to the lyase 1 family. Argininosuccinate lyase subfamily.

The protein localises to the cytoplasm. It carries out the reaction 2-(N(omega)-L-arginino)succinate = fumarate + L-arginine. It participates in amino-acid biosynthesis; L-arginine biosynthesis; L-arginine from L-ornithine and carbamoyl phosphate: step 3/3. This Shewanella oneidensis (strain ATCC 700550 / JCM 31522 / CIP 106686 / LMG 19005 / NCIMB 14063 / MR-1) protein is Argininosuccinate lyase.